The primary structure comprises 163 residues: NADH-quinone oxidoreductase subunit I (163 aa).

4Fe-4S ferredoxin-type domains are found at residues 55-84 (RRYE…IESE) and 94-123 (TQYD…ETRV). [4Fe-4S] cluster-binding residues include Cys-64, Cys-67, Cys-70, Cys-74, Cys-103, Cys-106, Cys-109, and Cys-113.

The protein belongs to the complex I 23 kDa subunit family. In terms of assembly, NDH-1 is composed of 14 different subunits. Subunits NuoA, H, J, K, L, M, N constitute the membrane sector of the complex. It depends on [4Fe-4S] cluster as a cofactor.

The protein resides in the cell inner membrane. It catalyses the reaction a quinone + NADH + 5 H(+)(in) = a quinol + NAD(+) + 4 H(+)(out). In terms of biological role, NDH-1 shuttles electrons from NADH, via FMN and iron-sulfur (Fe-S) centers, to quinones in the respiratory chain. The immediate electron acceptor for the enzyme in this species is believed to be ubiquinone. Couples the redox reaction to proton translocation (for every two electrons transferred, four hydrogen ions are translocated across the cytoplasmic membrane), and thus conserves the redox energy in a proton gradient. In Hydrogenovibrio crunogenus (strain DSM 25203 / XCL-2) (Thiomicrospira crunogena), this protein is NADH-quinone oxidoreductase subunit I.